We begin with the raw amino-acid sequence, 457 residues long: MIKRTVKNIAEMVKGTLANPQYEQTVIHGVATDTRKLEQHQLFIPLKGERFDGHSFVEQAFEAGVAAVLWDRSVPNPPENHAVILVDDTLTALQQLAKAYLQELGTRVIGVTGSNGKTTTKDMIHAVLGTQYRVHKTGGNFNNHIGLPLTVLAMPENTEIAVLEMGMSAKGEIDLLSRLANPDAAVITNIGESHMQDLGSREGIAEAKLEIINGLKEDGVLIYIGDEPLLQNAYSCQTKTYGTGTHNDYQLQDVSQSEEGTHFTIKGIENTFFIPILGKHNVMNAMAAIAAGAYFGIAPEDAAKGLSGLKVTGMRLELIKTDSGLSIINDAYNASPTSMKAAIQLTESLEGYGKKMLVLGDMLELGDLEETFHKECGAVISPDKIDRVFTYGKLGAFIAEGALKHFEKDRVSHYTEKKDLLQAVKENASKGDLILFKASRGMKLEEIVKDLIESPLS.

An ATP-binding site is contributed by 113–119 (GSNGKTT).

This sequence belongs to the MurCDEF family. MurF subfamily.

It is found in the cytoplasm. It catalyses the reaction D-alanyl-D-alanine + UDP-N-acetyl-alpha-D-muramoyl-L-alanyl-gamma-D-glutamyl-meso-2,6-diaminopimelate + ATP = UDP-N-acetyl-alpha-D-muramoyl-L-alanyl-gamma-D-glutamyl-meso-2,6-diaminopimeloyl-D-alanyl-D-alanine + ADP + phosphate + H(+). Its pathway is cell wall biogenesis; peptidoglycan biosynthesis. Functionally, involved in cell wall formation. Catalyzes the final step in the synthesis of UDP-N-acetylmuramoyl-pentapeptide, the precursor of murein. The polypeptide is UDP-N-acetylmuramoyl-tripeptide--D-alanyl-D-alanine ligase (Bacillus subtilis (strain 168)).